The chain runs to 85 residues: MIPAVVLLLLLLVEQAAALGEPQLCYILDAILFLYGIVLTLLYCRLKLQVRKAATASEKSDGIYTGLSTRTQETYETLKHEKPPQ.

Positions 1-18 (MIPAVVLLLLLLVEQAAA) are cleaved as a signal peptide. The Extracellular portion of the chain corresponds to 19-23 (LGEPQ). The helical transmembrane segment at 24-44 (LCYILDAILFLYGIVLTLLYC) threads the bilayer. Over 45–85 (RLKLQVRKAATASEKSDGIYTGLSTRTQETYETLKHEKPPQ) the chain is Cytoplasmic. The region spanning 53 to 81 (AATASEKSDGIYTGLSTRTQETYETLKHE) is the ITAM domain. A Phosphotyrosine modification is found at Tyr-64. A Phosphoserine modification is found at Ser-68. Tyr-75 is modified (phosphotyrosine). Thr-77 bears the Phosphothreonine mark.

This sequence belongs to the CD3Z/FCER1G family. In terms of assembly, igE Fc receptor is a tetramer of an alpha chain, a beta chain, and two disulfide linked gamma chains. Associates with FCGR1A; forms a functional signaling complex. The signaling subunit of immunoglobulin gamma (IgG) Fc receptor complex. As a homodimer or a heterodimer of CD247 and FCER1G, associates with the ligand binding subunit FCGR3A to form a functional receptor complex. Associates with CLEC6A. Interacts with CLEC4E. Interacts (via ITAM domain) with SYK (via SH2 domains); activates SYK, enabling integrin-mediated activation of neutrophils and macrophages. Interacts with CSF2RB and recruits SYK in response to IL3 stimulation; this interaction is direct. Interacts with CD300LH; the interaction may be indirect. Interacts with CD300LD. Interacts with TARM1.

The protein localises to the cell membrane. In terms of biological role, adapter protein containing an immunoreceptor tyrosine-based activation motif (ITAM) that transduces activation signals from various immunoreceptors. As a component of the high-affinity immunoglobulin E (IgE) receptor, mediates allergic inflammatory signaling in mast cells. As a constitutive component of interleukin-3 receptor complex, selectively mediates interleukin 4/IL4 production by basophils priming T-cells toward effector T-helper 2 subset. Associates with pattern recognition receptors CLEC4D and CLEC4E to form a functional signaling complex in myeloid cells. Binding of mycobacterial trehalose 6,6'-dimycolate (TDM) to this receptor complex leads to phosphorylation of ITAM, triggering activation of SYK, CARD9 and NF-kappa-B, consequently driving maturation of antigen-presenting cells and shaping antigen-specific priming of T-cells toward effector T-helper 1 and T-helper 17 cell subtypes. May function cooperatively with other activating receptors. Functionally linked to integrin beta-2/ITGB2-mediated neutrophil activation. Also involved in integrin alpha-2/ITGA2-mediated platelet activation. The polypeptide is High affinity immunoglobulin epsilon receptor subunit gamma (FCER1G) (Bos taurus (Bovine)).